We begin with the raw amino-acid sequence, 338 residues long: Protein FosB (338 aa).

Disordered stretches follow at residues 1 to 54 and 80 to 179; these read MFQA…PGSF and AQSQ…RREL. A compositionally biased stretch (polar residues) spans 13–31; it reads SRCSSSPSAESQYLSSVDS. Ser-27 bears the Phosphoserine mark. The span at 123–137 shows a compositional bias: low complexity; the sequence is PSTSTSTSGPVSARP. In terms of domain architecture, bZIP spans 155-218; that stretch reads EEKRRVRRER…ERLEFVLVAH (64 aa). Positions 157-182 are basic motif; sequence KRRVRRERNKLAAAKCRNRRRELTDR. The segment at 183 to 211 is leucine-zipper; the sequence is LQAETDQLEEEKAELESEIAELQKEKERL. Disordered stretches follow at residues 222-276 and 315-338; these read CKIP…PPNL and AGSQRTSGSEQPSDPLNSPSLLAL. A compositionally biased stretch (pro residues) spans 256 to 265; it reads LPPPPPPPLP. The segment covering 266-276 has biased composition (polar residues); that stretch reads FQSSRDAPPNL.

Belongs to the bZIP family. Fos subfamily. As to quaternary structure, heterodimer; binds to DNA as heterodimer. Component of an AP-1 transcription factor complex; composed of FOS-JUN heterodimers. As part of the AP-1 transcription factor complex, forms heterodimers with JUN, JUNB or JUND, thereby binding to the AP-1 consensus sequence and stimulating transcription. Phosphorylated; phosphorylation is induced by chronic electroconvulsive seizure (ECS) treatment. As to expression, expressed in brain. Expressed in pyramidal cells in CA1 and CA3, in the dentate gyrus and the nucleus accumbens (at protein level).

It localises to the nucleus. Functionally, heterodimerizes with proteins of the JUN family to form an AP-1 transcription factor complex, thereby enhancing their DNA binding activity to an AP-1 consensus sequence 5'-TGA[GC]TCA-3' and enhancing their transcriptional activity. Exhibits transactivation activity in vitro. As part of the AP-1 complex, facilitates enhancer selection together with cell-type-specific transcription factors by collaboratively binding to nucleosomal enhancers and recruiting the SWI/SNF (BAF) chromatin remodeling complex to establish accessible chromatin. Together with JUN, plays a role in activation-induced cell death of T cells by binding to the AP-1 promoter site of FASLG/CD95L, and inducing its transcription in response to activation of the TCR/CD3 signaling pathway. Involved in the display of nurturing behavior towards newborns. May play a role in neurogenesis in the hippocampus and in learning and memory-related tasks by regulating the expression of various genes involved in neurogenesis, depression and epilepsy. Implicated in behavioral responses related to morphine reward and spatial memory. This chain is Protein FosB, found in Rattus norvegicus (Rat).